Here is a 301-residue protein sequence, read N- to C-terminus: MSSLPPFVTTLDLKLAEKLLKDLQQQGFSITIPAYTRFSASKKGLTCTLYTSGKLVVQGKEQAHFIEFYLEPEILESFGFSHPTTKIDLTPHIGIDESGKGDFFGPLCIAGVYIQANQFSKLQALGVKDSKTLSDKTIRQLASQIKNLCLYHIVKINPAKYNEIYQDFKNLNHLLAWGHATTIEQLILQSGCQTVIVDQFADEKVVLLALKRKKLDVNLTQRHRAEDDLAVAAASILARQAFIDGLEQLSKEIQIPLPKGSSSATQKAGKEVLRKWGEERLRSICKQHFKTLDAILGKVGK.

The 212-residue stretch at T90 to K301 folds into the RNase H type-2 domain. D96, E97, and D198 together coordinate a divalent metal cation.

The protein belongs to the RNase HII family. RnhC subfamily. Mn(2+) serves as cofactor. Requires Mg(2+) as cofactor.

It localises to the cytoplasm. The enzyme catalyses Endonucleolytic cleavage to 5'-phosphomonoester.. Its function is as follows. Endonuclease that specifically degrades the RNA of RNA-DNA hybrids. This Protochlamydia amoebophila (strain UWE25) protein is Ribonuclease HIII.